Here is a 102-residue protein sequence, read N- to C-terminus: Acylphosphatase 1 (102 aa).

The 89-residue stretch at 12-100 folds into the Acylphosphatase-like domain; that stretch reads TRLVRVRGRV…PRFDRFEQLP (89 aa). Active-site residues include Arg27 and Asn45.

This sequence belongs to the acylphosphatase family.

The enzyme catalyses an acyl phosphate + H2O = a carboxylate + phosphate + H(+). The chain is Acylphosphatase 1 (acyP1) from Ralstonia nicotianae (strain ATCC BAA-1114 / GMI1000) (Ralstonia solanacearum).